We begin with the raw amino-acid sequence, 292 residues long: Tricin synthase 2 (292 aa).

Residues 21 to 46 (RTTPASRVSSTAMAAANGDASHGANG) form a disordered region. Residues 23–32 (TPASRVSSTA) are compositionally biased toward polar residues. S-adenosyl-L-methionine is bound by residues S108, E130, 132–133 (GV), S138, D156, and A185. D208 serves as a coordination point for a divalent metal cation. D210 provides a ligand contact to S-adenosyl-L-methionine. A divalent metal cation is bound by residues D234 and N235.

Belongs to the class I-like SAM-binding methyltransferase superfamily. Cation-dependent O-methyltransferase family. CCoAMT subfamily. Mg(2+) is required as a cofactor. The cofactor is Mn(2+). As to expression, expressed in stems only.

It catalyses the reaction tricetin + 2 S-adenosyl-L-methionine = 3',5'-di-O-methyltricetin + 2 S-adenosyl-L-homocysteine + 2 H(+). Functionally, catalyzes the stepwise methylation of tricetin to its 3'-mono- and 3',5'-dimethyl ethers. No 3',4',5'-trimethylated ester derivatives are produced. Can use caffeoyl CoA, 5-hydroxyferulic acid, luteolin, tricetin, quercetin, myrcetin and 7,8-dihydroxyflavone as substrates, but not naringenin, apigenin or kaempferol. The 2,3-double bond and the O-dihydroxyl group of the substrate are both required for catalytic activity of the enzyme. This chain is Tricin synthase 2 (ROMT-17), found in Oryza sativa subsp. japonica (Rice).